We begin with the raw amino-acid sequence, 380 residues long: Guanine nucleotide-binding protein subunit beta (380 aa).

WD repeat units follow at residues 64–103, 106–145, 155–195, 203–243, 247–286, 296–335, and 342–380; these read GHSGKVYSLDWTPEKNWIVSASQDGRLIVWNALTSQKTHA, LHCPWVMTCAFAPNGQSVACGGLDSACSIFNLNSQADRDG, GHKG…RISI, GHTA…RAVR, GHEGDINSVKFFPDGQRFGTGSDDGTCRLFDVRTGHQLQV, NELPTVTSIAFSISGRLLFAGYSNGDCYVWDTLLAEVVLN, and SHEGRISCLGLSSDGSALCTGSWDKNLKIWAFSGHRKIV.

Belongs to the WD repeat G protein beta family. G proteins are composed of 3 units, alpha, beta and gamma. Interacts with the gamma subunits RGG1 and RGG2.

The protein localises to the cell membrane. In terms of biological role, guanine nucleotide-binding proteins (G proteins) are involved as modulators or transducers in various transmembrane signaling systems. The beta and gamma chains are required for the GTPase activity, for replacement of GDP by GTP, and for G protein-effector interaction. In Oryza sativa subsp. indica (Rice), this protein is Guanine nucleotide-binding protein subunit beta.